The primary structure comprises 130 residues: Small ribosomal subunit protein uS8 (130 aa).

This sequence belongs to the universal ribosomal protein uS8 family. Part of the 30S ribosomal subunit. Contacts proteins S5 and S12.

In terms of biological role, one of the primary rRNA binding proteins, it binds directly to 16S rRNA central domain where it helps coordinate assembly of the platform of the 30S subunit. This is Small ribosomal subunit protein uS8 from Tolumonas auensis (strain DSM 9187 / NBRC 110442 / TA 4).